The following is a 459-amino-acid chain: Smoothelin-like protein 1 (459 aa).

Over residues 1–27 the composition is skewed to polar residues; sequence MEQTEGNSSEDGTTVSPTAGNLETPGS. The tract at residues 1–314 is disordered; sequence MEQTEGNSSE…RPRGPRAQNR (314 aa). Basic and acidic residues-rich tracts occupy residues 42–55, 75–105, 112–168, 185–211, and 221–232; these read SDKE…EHLC, DELK…KEDT, DTGK…KEDA, ADVK…KELV, and EQGKENESEERA. A coiled-coil region spans residues 124–154; the sequence is NEVREKEEAMLASEKQKVDEKETNLESKEKS. Positions 260 to 283 are enriched in low complexity; sequence PESTGETSPSASESSPSEVPGSPT. The segment covering 287–300 has biased composition (basic and acidic residues); the sequence is PSEKKKDRAPERRV. Ser-301 bears the Phosphoserine; by PKA and PKG mark. Positions 343 to 449 constitute a Calponin-homology (CH) domain; sequence GGVKNMLLEW…YIQELYRSLV (107 aa). The tract at residues 441-459 is calmodulin-binding; sequence IQELYRSLVQKGLVKTKKK.

This sequence belongs to the smoothelin family. In terms of assembly, interacts with PPP1R12A. In terms of processing, maximal phosphorylation of Ser-301 correlates with maximal relaxation of aorta in response to acetylcholine. In terms of tissue distribution, widely expressed, with highest expression in skeletal muscles (at protein level). Within striated muscles, significantly more expressed in soleus muscle compared with plantaris muscle or white vastus (at protein level). 30-40% lower expression in females than in males (at protein level). Expressed in type 2a fibers, but not detected in fast twitch type 2b muscle white vastus nor in oxidative type I/b heart muscle (at protein level). Expressed within myometrial cells of the uterus, as well as in the endometrial layer. In the aorta, confined to smooth muscle cells. Not detected in endothelial cells.

Its subcellular location is the cytoplasm. The protein resides in the myofibril. It is found in the sarcomere. It localises to the i band. The protein localises to the m line. Its subcellular location is the nucleus. Its function is as follows. Plays a role in the regulation of contractile properties of both striated and smooth muscles. When unphosphorylated, may inhibit myosin dephosphorylation. Phosphorylation at Ser-301 reduces this inhibitory activity. This is Smoothelin-like protein 1 (Smtnl1) from Mus musculus (Mouse).